The sequence spans 308 residues: Maspardin (308 aa).

The AB hydrolase-1 domain maps to 87–159 (FCDGFRKLLD…NSFWLMPAFM (73 aa)).

The protein belongs to the AB hydrolase superfamily. As to quaternary structure, interacts with CD4. Interacts with ALDH16A1.

The protein localises to the cytoplasm. Functionally, may play a role as a negative regulatory factor in CD4-dependent T-cell activation. The sequence is that of Maspardin (SPG21) from Macaca fascicularis (Crab-eating macaque).